Consider the following 157-residue polypeptide: MITEIMKQVEIFTDGSCLGNPGPGGYGIVMRYKGTEKTFSGGFNQTTNNRMEMLAAVVALRNLKEPCIVVLTTDSQYVRQGITQWIHGWKKRGWKKADKKPVVNADLWKQLDAEAERHTVDWRWVKGHAGHRENEMCDDLARTAAENPTQDDTGYPG.

The RNase H type-1 domain maps to 5-146 (IMKQVEIFTD…CDDLARTAAE (142 aa)). Asp14, Glu52, Asp74, and Asp138 together coordinate Mg(2+).

It belongs to the RNase H family. In terms of assembly, monomer. Requires Mg(2+) as cofactor.

The protein localises to the cytoplasm. The enzyme catalyses Endonucleolytic cleavage to 5'-phosphomonoester.. Its function is as follows. Endonuclease that specifically degrades the RNA of RNA-DNA hybrids. In Aliivibrio salmonicida (strain LFI1238) (Vibrio salmonicida (strain LFI1238)), this protein is Ribonuclease H.